The sequence spans 241 residues: Ashwin (241 aa).

Disordered stretches follow at residues 1-21, 82-102, and 212-241; these read MAAQGRGRVGGGKEERVSARS, KMMEKKRKQNEPKSENKSVTA, and KRSVPKDESDLPNDLKPTEAKKKIQHCTWP. Over residues 11-21 the composition is skewed to basic and acidic residues; that stretch reads GGKEERVSARS.

The protein belongs to the ashwin family.

It localises to the nucleus. The polypeptide is Ashwin (Gallus gallus (Chicken)).